Reading from the N-terminus, the 186-residue chain is Cytochrome c oxidase polypeptide 5, mitochondrial (186 aa).

A mitochondrion-targeting transit peptide spans 1 to 20 (MYLSKIICKKVPMKLLCTRN). Topologically, residues 21-107 (AATVSAAATN…GPRAFSHISQ (87 aa)) are mitochondrial matrix. Residues 108–128 (KTVFWGTVAGLTIGVVLFGLI) traverse the membrane as a helical segment. Residues 129-186 (RTQAAPSPRTMTREWQEKSNEYMKENKINPISGEASEGFKGRGQISGGIFSPSEKDKK) lie on the Mitochondrial intermembrane side of the membrane. The interval 149–186 (EYMKENKINPISGEASEGFKGRGQISGGIFSPSEKDKK) is disordered.

This sequence belongs to the cytochrome c oxidase IV family. As to quaternary structure, component of the cytochrome c oxidase (complex IV, CIV), a multisubunit enzyme composed of a catalytic core of 3 subunits and seevral supernumerary subunits. The complex exists as a monomer or a dimer and forms supercomplexes (SCs) in the inner mitochondrial membrane with ubiquinol-cytochrome c oxidoreductase (cytochrome b-c1 complex, complex III, CIII).

The protein localises to the mitochondrion inner membrane. It participates in energy metabolism; oxidative phosphorylation. Functionally, component of the cytochrome c oxidase, the last enzyme in the mitochondrial electron transport chain which drives oxidative phosphorylation. The respiratory chain contains 3 multisubunit complexes succinate dehydrogenase (complex II, CII), ubiquinol-cytochrome c oxidoreductase (cytochrome b-c1 complex, complex III, CIII) and cytochrome c oxidase (complex IV, CIV), that cooperate to transfer electrons derived from NADH and succinate to molecular oxygen, creating an electrochemical gradient over the inner membrane that drives transmembrane transport and the ATP synthase. Cytochrome c oxidase is the component of the respiratory chain that catalyzes the reduction of oxygen to water. Electrons originating from reduced cytochrome c in the intermembrane space (IMS) are transferred via the dinuclear copper A center (CU(A)) of subunit 2 and heme A of subunit 1 to the active site in subunit 1, a binuclear center (BNC) formed by heme A3 and copper B (CU(B)). The BNC reduces molecular oxygen to 2 water molecules using 4 electrons from cytochrome c in the IMS and 4 protons from the mitochondrial matrix. The protein is Cytochrome c oxidase polypeptide 5, mitochondrial (cox5) of Schizosaccharomyces pombe (strain 972 / ATCC 24843) (Fission yeast).